Reading from the N-terminus, the 136-residue chain is Putative pre-16S rRNA nuclease (136 aa).

This sequence belongs to the YqgF nuclease family.

The protein localises to the cytoplasm. In terms of biological role, could be a nuclease involved in processing of the 5'-end of pre-16S rRNA. The sequence is that of Putative pre-16S rRNA nuclease from Francisella tularensis subsp. tularensis (strain FSC 198).